A 371-amino-acid polypeptide reads, in one-letter code: tRNA-specific 2-thiouridylase MnmA (371 aa).

ATP is bound by residues 13–20 (GMSGGVDS) and Met-39. The interval 99–101 (NPD) is interaction with target base in tRNA. Cys-104 serves as the catalytic Nucleophile. A disulfide bridge connects residues Cys-104 and Cys-200. An ATP-binding site is contributed by Gly-128. An interaction with tRNA region spans residues 150-152 (KDQ). The Cysteine persulfide intermediate role is filled by Cys-200. An interaction with tRNA region spans residues 308 to 309 (RY).

It belongs to the MnmA/TRMU family.

It localises to the cytoplasm. It carries out the reaction S-sulfanyl-L-cysteinyl-[protein] + uridine(34) in tRNA + AH2 + ATP = 2-thiouridine(34) in tRNA + L-cysteinyl-[protein] + A + AMP + diphosphate + H(+). In terms of biological role, catalyzes the 2-thiolation of uridine at the wobble position (U34) of tRNA, leading to the formation of s(2)U34. This Bacillus cytotoxicus (strain DSM 22905 / CIP 110041 / 391-98 / NVH 391-98) protein is tRNA-specific 2-thiouridylase MnmA.